Here is a 331-residue protein sequence, read N- to C-terminus: Ketol-acid reductoisomerase (NADP(+)) (331 aa).

A KARI N-terminal Rossmann domain is found at 1–181 (MKMYYDADAD…GGTRAGVIET (181 aa)). Residues 24-27 (YGSQ), R47, S50, and 82-85 (DEKQ) contribute to the NADP(+) site. H107 is an active-site residue. G133 contributes to the NADP(+) binding site. Residues 182–327 (TFREETETDL…KKLRAMMPWL (146 aa)) form the KARI C-terminal knotted domain. Mg(2+) is bound by residues D190, E194, E226, and E230. S251 contributes to the substrate binding site.

The protein belongs to the ketol-acid reductoisomerase family. Requires Mg(2+) as cofactor.

The enzyme catalyses (2R)-2,3-dihydroxy-3-methylbutanoate + NADP(+) = (2S)-2-acetolactate + NADPH + H(+). The catalysed reaction is (2R,3R)-2,3-dihydroxy-3-methylpentanoate + NADP(+) = (S)-2-ethyl-2-hydroxy-3-oxobutanoate + NADPH + H(+). It participates in amino-acid biosynthesis; L-isoleucine biosynthesis; L-isoleucine from 2-oxobutanoate: step 2/4. The protein operates within amino-acid biosynthesis; L-valine biosynthesis; L-valine from pyruvate: step 2/4. Its function is as follows. Involved in the biosynthesis of branched-chain amino acids (BCAA). Catalyzes an alkyl-migration followed by a ketol-acid reduction of (S)-2-acetolactate (S2AL) to yield (R)-2,3-dihydroxy-isovalerate. In the isomerase reaction, S2AL is rearranged via a Mg-dependent methyl migration to produce 3-hydroxy-3-methyl-2-ketobutyrate (HMKB). In the reductase reaction, this 2-ketoacid undergoes a metal-dependent reduction by NADPH to yield (R)-2,3-dihydroxy-isovalerate. The sequence is that of Ketol-acid reductoisomerase (NADP(+)) from Heliobacterium modesticaldum (strain ATCC 51547 / Ice1).